A 123-amino-acid polypeptide reads, in one-letter code: Keratin-associated protein 2-2 (123 aa).

Residues 5–112 form an 11 X 5 AA repeats of C-C-[CDPQRWG]-[APRS]-[CIPSTVD] region; the sequence is CCGSTFSSLS…SVQSPCGQPT (108 aa).

It belongs to the KRTAP type 2 family. As to quaternary structure, interacts with hair keratins.

In terms of biological role, in the hair cortex, hair keratin intermediate filaments are embedded in an interfilamentous matrix, consisting of hair keratin-associated proteins (KRTAP), which are essential for the formation of a rigid and resistant hair shaft through their extensive disulfide bond cross-linking with abundant cysteine residues of hair keratins. The matrix proteins include the high-sulfur and high-glycine-tyrosine keratins. The chain is Keratin-associated protein 2-2 (KRTAP2-2) from Homo sapiens (Human).